Reading from the N-terminus, the 96-residue chain is Muconolactone Delta-isomerase (96 aa).

Belongs to the muconolactone Delta-isomerase family. As to quaternary structure, homodecamer.

The enzyme catalyses (S)-muconolactone = (4,5-dihydro-5-oxofuran-2-yl)-acetate. Its pathway is aromatic compound metabolism; beta-ketoadipate pathway; 5-oxo-4,5-dihydro-2-furylacetate from catechol: step 3/3. The chain is Muconolactone Delta-isomerase (catC) from Pseudomonas aeruginosa (strain ATCC 15692 / DSM 22644 / CIP 104116 / JCM 14847 / LMG 12228 / 1C / PRS 101 / PAO1).